We begin with the raw amino-acid sequence, 318 residues long: 4-hydroxy-3-methylbut-2-enyl diphosphate reductase (318 aa).

[4Fe-4S] cluster is bound at residue Cys12. (2E)-4-hydroxy-3-methylbut-2-enyl diphosphate contacts are provided by His41 and His74. Residues His41 and His74 each contribute to the dimethylallyl diphosphate site. Residues His41 and His74 each coordinate isopentenyl diphosphate. Residue Cys96 participates in [4Fe-4S] cluster binding. His124 is a binding site for (2E)-4-hydroxy-3-methylbut-2-enyl diphosphate. His124 lines the dimethylallyl diphosphate pocket. His124 serves as a coordination point for isopentenyl diphosphate. Glu126 acts as the Proton donor in catalysis. A (2E)-4-hydroxy-3-methylbut-2-enyl diphosphate-binding site is contributed by Thr168. Residue Cys198 coordinates [4Fe-4S] cluster. The (2E)-4-hydroxy-3-methylbut-2-enyl diphosphate site is built by Ser226, Ser227, Asn228, and Ser270. Positions 226, 227, 228, and 270 each coordinate dimethylallyl diphosphate. The isopentenyl diphosphate site is built by Ser226, Ser227, Asn228, and Ser270.

It belongs to the IspH family. [4Fe-4S] cluster is required as a cofactor.

It catalyses the reaction isopentenyl diphosphate + 2 oxidized [2Fe-2S]-[ferredoxin] + H2O = (2E)-4-hydroxy-3-methylbut-2-enyl diphosphate + 2 reduced [2Fe-2S]-[ferredoxin] + 2 H(+). It carries out the reaction dimethylallyl diphosphate + 2 oxidized [2Fe-2S]-[ferredoxin] + H2O = (2E)-4-hydroxy-3-methylbut-2-enyl diphosphate + 2 reduced [2Fe-2S]-[ferredoxin] + 2 H(+). It functions in the pathway isoprenoid biosynthesis; dimethylallyl diphosphate biosynthesis; dimethylallyl diphosphate from (2E)-4-hydroxy-3-methylbutenyl diphosphate: step 1/1. The protein operates within isoprenoid biosynthesis; isopentenyl diphosphate biosynthesis via DXP pathway; isopentenyl diphosphate from 1-deoxy-D-xylulose 5-phosphate: step 6/6. In terms of biological role, catalyzes the conversion of 1-hydroxy-2-methyl-2-(E)-butenyl 4-diphosphate (HMBPP) into a mixture of isopentenyl diphosphate (IPP) and dimethylallyl diphosphate (DMAPP). Acts in the terminal step of the DOXP/MEP pathway for isoprenoid precursor biosynthesis. In Psychrobacter arcticus (strain DSM 17307 / VKM B-2377 / 273-4), this protein is 4-hydroxy-3-methylbut-2-enyl diphosphate reductase.